Consider the following 887-residue polypeptide: UPF0182 protein CTC_00086 (887 aa).

7 helical membrane-spanning segments follow: residues 9-29 (FIAIIILLLILFLYRSTSFII), 47-67 (FFTIGKLFTLSFALIFISIWL), 87-107 (LMIAFNCIVSSLFAYFFSSKY), 146-166 (VLILRVLVFLVIYTLILYFII), 195-215 (GKQLAVVSAIILLFLSMGYII), 242-262 (IYRIIIIVSFIGSIVVFISII), and 266-286 (IKPIIISLVLIFLLILSEGAT).

Belongs to the UPF0182 family.

It is found in the cell membrane. The chain is UPF0182 protein CTC_00086 from Clostridium tetani (strain Massachusetts / E88).